We begin with the raw amino-acid sequence, 101 residues long: Small ribosomal subunit protein uS14 (101 aa).

The protein belongs to the universal ribosomal protein uS14 family. Part of the 30S ribosomal subunit. Contacts proteins S3 and S10.

Its function is as follows. Binds 16S rRNA, required for the assembly of 30S particles and may also be responsible for determining the conformation of the 16S rRNA at the A site. This is Small ribosomal subunit protein uS14 from Ehrlichia canis (strain Jake).